Here is a 505-residue protein sequence, read N- to C-terminus: Poxin-Schlafen (505 aa).

A poxin-like region spans residues 1-238 (MAMFYAHAFG…SKEERVDYVL (238 aa)). The active-site Proton donor is the His17. The active-site Shared with catalytic histidine of dimeric partner is Tyr138. Catalysis depends on Lys142, which acts as the Proton acceptor; shared with catalytic histidine of dimeric partner. The schlafen-like stretch occupies residues 239-505 (MKRLESIRHL…PDEWVSHIKF (267 aa)).

It in the N-terminal section; belongs to the poxin family. This sequence in the C-terminal section; belongs to the Schlafen protein family. Subgroup poxviridae B3 subfamily. Homodimer.

It carries out the reaction 2',3'-cGAMP + H2O = Gp(2'-5')Ap(3') + H(+). Functionally, nuclease that is responsible for viral evasion of host cGAS-STING innate immunity. Cleaves 2',3'-cGAMP which is produced by host cGAS following recognition of cytosolic DNA and blocks the subsequent 2',3'-cGAMP-mediated activation of TMEM173/STING, which normally spreads to adjacent cells and activates the interferon and NF-kappa-B immune responses. This chain is Poxin-Schlafen (OPG188), found in Bos taurus (Bovine).